Reading from the N-terminus, the 68-residue chain is Conotoxin Mi11.1 (68 aa).

The signal sequence occupies residues 1–26 (MMLRLTSVSCFLLVIACLNLFQVVLT). Intrachain disulfides connect cysteine 29-cysteine 43, cysteine 36-cysteine 48, cysteine 42-cysteine 52, and cysteine 47-cysteine 56. At tyrosine 60 the chain carries Tyrosine amide. A propeptide spanning residues 64-68 (ATFQE) is cleaved from the precursor.

It belongs to the conotoxin I2 superfamily. In terms of tissue distribution, expressed by the venom duct.

It is found in the secreted. This is Conotoxin Mi11.1 from Conus miles (Soldier cone).